The sequence spans 389 residues: Lipid-A-disaccharide synthase (389 aa).

This sequence belongs to the LpxB family.

The catalysed reaction is a lipid X + a UDP-2-N,3-O-bis[(3R)-3-hydroxyacyl]-alpha-D-glucosamine = a lipid A disaccharide + UDP + H(+). It functions in the pathway bacterial outer membrane biogenesis; LPS lipid A biosynthesis. Functionally, condensation of UDP-2,3-diacylglucosamine and 2,3-diacylglucosamine-1-phosphate to form lipid A disaccharide, a precursor of lipid A, a phosphorylated glycolipid that anchors the lipopolysaccharide to the outer membrane of the cell. This Burkholderia vietnamiensis (strain G4 / LMG 22486) (Burkholderia cepacia (strain R1808)) protein is Lipid-A-disaccharide synthase.